The chain runs to 154 residues: Myoglobin (154 aa).

The Globin domain occupies V2–K148. At S4 the chain carries Phosphoserine. Position 65 (H65) interacts with nitrite. H65 contributes to the O2 binding site. T68 is subject to Phosphothreonine. Position 94 (H94) interacts with heme b.

Belongs to the globin family. In terms of assembly, monomeric.

It localises to the cytoplasm. It is found in the sarcoplasm. It catalyses the reaction Fe(III)-heme b-[protein] + nitric oxide + H2O = Fe(II)-heme b-[protein] + nitrite + 2 H(+). The catalysed reaction is H2O2 + AH2 = A + 2 H2O. In terms of biological role, monomeric heme protein which primary function is to store oxygen and facilitate its diffusion within muscle tissues. Reversibly binds oxygen through a pentacoordinated heme iron and enables its timely and efficient release as needed during periods of heightened demand. Depending on the oxidative conditions of tissues and cells, and in addition to its ability to bind oxygen, it also has a nitrite reductase activity whereby it regulates the production of bioactive nitric oxide. Under stress conditions, like hypoxia and anoxia, it also protects cells against reactive oxygen species thanks to its pseudoperoxidase activity. The protein is Myoglobin of Balaena mysticetus (Bowhead whale).